A 475-amino-acid chain; its full sequence is Aspartyl/glutamyl-tRNA(Asn/Gln) amidotransferase subunit B (475 aa).

This sequence belongs to the GatB/GatE family. GatB subfamily. Heterotrimer of A, B and C subunits.

It catalyses the reaction L-glutamyl-tRNA(Gln) + L-glutamine + ATP + H2O = L-glutaminyl-tRNA(Gln) + L-glutamate + ADP + phosphate + H(+). The enzyme catalyses L-aspartyl-tRNA(Asn) + L-glutamine + ATP + H2O = L-asparaginyl-tRNA(Asn) + L-glutamate + ADP + phosphate + 2 H(+). Its function is as follows. Allows the formation of correctly charged Asn-tRNA(Asn) or Gln-tRNA(Gln) through the transamidation of misacylated Asp-tRNA(Asn) or Glu-tRNA(Gln) in organisms which lack either or both of asparaginyl-tRNA or glutaminyl-tRNA synthetases. The reaction takes place in the presence of glutamine and ATP through an activated phospho-Asp-tRNA(Asn) or phospho-Glu-tRNA(Gln). The sequence is that of Aspartyl/glutamyl-tRNA(Asn/Gln) amidotransferase subunit B from Chlorobaculum tepidum (strain ATCC 49652 / DSM 12025 / NBRC 103806 / TLS) (Chlorobium tepidum).